A 102-amino-acid chain; its full sequence is Biotrophy-associated secreted protein 4 (102 aa).

The N-terminal stretch at 1 to 21 (MQLSFSAIAILLAFAVNHATA) is a signal peptide. Asparagine 36 is a glycosylation site (N-linked (GlcNAc...) asparagine).

The protein resides in the secreted. Secreted effector involved in biotrophic colonization of plant cells. Participates in transition from the biotrophic to the necrotrophic phase of Magnaporthe oryzae. Elicits rice basic defense responses during the early stage of interaction and promotes cell death in the late stage of compatible interaction. The sequence is that of Biotrophy-associated secreted protein 4 from Pyricularia oryzae (strain 70-15 / ATCC MYA-4617 / FGSC 8958) (Rice blast fungus).